The chain runs to 341 residues: MNRKVLKVIDGETVFPPPIWMMRQAGRYLPEYRETRKKAGSFLDLCYSPDLAVEVTLQPIRRFGFDAAILFSDILVVPHALGRDLRFEEGKGPLMTPIDADEIFWLETEGVAKRLEPVYETVRLVREQLPDETTLLGFCGAPWTVATYMIAGHGTPDQAPARLFAYRFPEAFEKLLNDLADVSAEYLIEQLGAGADAVQIFDSWSGVLDEDCFERFCIRPVARIVQKVRAVYPQARIIGFPKGAGMLYAGYREKTGVDMLGLDWSVPLSFAALLQEEGAVQGNLDPLRVVAGGNALDEGVDAILERMGQGPLVFNLGHGITPQAPIENVQRMIDRVRGGKS.

Substrate is bound by residues 23–27, Asp-73, Tyr-148, Ser-203, and His-318; that span reads RQAGR.

This sequence belongs to the uroporphyrinogen decarboxylase family. As to quaternary structure, homodimer.

The protein resides in the cytoplasm. It catalyses the reaction uroporphyrinogen III + 4 H(+) = coproporphyrinogen III + 4 CO2. The protein operates within porphyrin-containing compound metabolism; protoporphyrin-IX biosynthesis; coproporphyrinogen-III from 5-aminolevulinate: step 4/4. Functionally, catalyzes the decarboxylation of four acetate groups of uroporphyrinogen-III to yield coproporphyrinogen-III. The chain is Uroporphyrinogen decarboxylase from Brucella suis (strain ATCC 23445 / NCTC 10510).